Here is a 345-residue protein sequence, read N- to C-terminus: 4-hydroxyproline 2-epimerase (345 aa).

Gln-85 is a substrate binding site. Ser-93 serves as the catalytic Proton acceptor. Residues Gly-94–Ser-95 and Asp-251 each bind substrate. Residue Cys-255 is the Proton donor of the active site. Gly-256 to Thr-257 provides a ligand contact to substrate.

This sequence belongs to the proline racemase family.

The catalysed reaction is trans-4-hydroxy-L-proline = cis-4-hydroxy-D-proline. Its function is as follows. Catalyzes the epimerization of trans-4-hydroxy-L-proline (t4LHyp) to cis-4-hydroxy-D-proline (c4DHyp). May be involved in a degradation pathway of t4LHyp. Can also catalyze the epimerization of trans-3-hydroxy-L-proline (t3LHyp) to cis-3-hydroxy-D-proline (c3DHyp) in vitro, albeit with 2-fold lower efficiency. Displays no proline racemase activity. The chain is 4-hydroxyproline 2-epimerase from Rhizobium etli (strain ATCC 51251 / DSM 11541 / JCM 21823 / NBRC 15573 / CFN 42).